The primary structure comprises 267 residues: Methylglyoxal reductase DkgB (267 aa).

Tyr-39 functions as the Proton donor in the catalytic mechanism. Residue His-97 participates in substrate binding. An NADP(+)-binding site is contributed by 179 to 231 (MTLAYGKALKDEVIARIAAKHNATPAQVILAWAMGEGYSVIPSSTKRENLESN).

It belongs to the aldo/keto reductase family. In terms of assembly, monomer.

Its subcellular location is the cytoplasm. It carries out the reaction hydroxyacetone + NADP(+) = methylglyoxal + NADPH + H(+). Aldo-keto reductase that significantly contributes to cellular methylglyoxal detoxification by catalyzing the NADPH-dependent conversion of methylglyoxal to acetol. The sequence is that of Methylglyoxal reductase DkgB from Escherichia coli O157:H7.